Consider the following 969-residue polypeptide: RNA polymerase-associated protein RapA (969 aa).

The Helicase ATP-binding domain maps to Glu164–Asp334. Position 177–184 (Asp177–Thr184) interacts with ATP. The DEAH box motif lies at Asp280–His283. The 195-residue stretch at Arg492–Arg686 folds into the Helicase C-terminal domain.

It belongs to the SNF2/RAD54 helicase family. RapA subfamily. As to quaternary structure, interacts with the RNAP. Has a higher affinity for the core RNAP than for the holoenzyme. Its ATPase activity is stimulated by binding to RNAP.

In terms of biological role, transcription regulator that activates transcription by stimulating RNA polymerase (RNAP) recycling in case of stress conditions such as supercoiled DNA or high salt concentrations. Probably acts by releasing the RNAP, when it is trapped or immobilized on tightly supercoiled DNA. Does not activate transcription on linear DNA. Probably not involved in DNA repair. The polypeptide is RNA polymerase-associated protein RapA (Vibrio parahaemolyticus serotype O3:K6 (strain RIMD 2210633)).